The following is a 171-amino-acid chain: Small ribosomal subunit protein bS16 (171 aa).

Residues 114–171 are disordered; it reads EGGPTTEAAKPKKKAATSGAKKAAKAAEPEAAASEAAEPEAAAAPAEGGEQAESSAES. The span at 142 to 171 shows a compositional bias: low complexity; sequence PEAAASEAAEPEAAAAPAEGGEQAESSAES.

This sequence belongs to the bacterial ribosomal protein bS16 family.

This Mycolicibacterium paratuberculosis (strain ATCC BAA-968 / K-10) (Mycobacterium paratuberculosis) protein is Small ribosomal subunit protein bS16.